The primary structure comprises 71 residues: Plasticin-DA1 (71 aa).

An N-terminal signal peptide occupies residues 1–22; the sequence is MAFLKKSLFLVLFLALVPLSIC. A propeptide spanning residues 23 to 42 is cleaved from the precursor; it reads EAEKREEENEEKQEDDDESE. A disordered region spans residues 25 to 45; that stretch reads EKREEENEEKQEDDDESEKKR. Residues 30-40 show a composition bias toward acidic residues; the sequence is ENEEKQEDDDE. Position 68 is a glycine amide (glycine 68). Positions 70–71 are excised as a propeptide; the sequence is ER.

It belongs to the frog skin active peptide (FSAP) family. Plasticin subfamily. In terms of tissue distribution, expressed by the skin glands.

It localises to the secreted. Its subcellular location is the target cell membrane. Its function is as follows. Neutral peptide with no antimicrobial activity. Does not permeate bacterial membranes. May act in synergy with cationic peptides by enhancing their activity. Has a moderate hemolytic activity. It interacts with zwitterionic phospholipids (DMPC) without perturbing either the interface or inside of the bilayer, whereas it causes little perturbations at the interface peptide-anionic vesicles (DMPG) as well as in the bilayer alkyl chains. The polypeptide is Plasticin-DA1 (Agalychnis dacnicolor (Giant Mexican leaf frog)).